We begin with the raw amino-acid sequence, 294 residues long: Probable 2-(5''-triphosphoribosyl)-3'-dephosphocoenzyme-A synthase (294 aa).

The protein belongs to the CitG/MdcB family.

The catalysed reaction is 3'-dephospho-CoA + ATP = 2'-(5''-triphospho-alpha-D-ribosyl)-3'-dephospho-CoA + adenine. The sequence is that of Probable 2-(5''-triphosphoribosyl)-3'-dephosphocoenzyme-A synthase from Streptococcus pyogenes serotype M5 (strain Manfredo).